Reading from the N-terminus, the 238-residue chain is Chromosome partition protein MukE (238 aa).

Belongs to the MukE family. As to quaternary structure, interacts, and probably forms a ternary complex, with MukF and MukB. The complex formation is stimulated by calcium or magnesium.

The protein resides in the cytoplasm. It is found in the nucleoid. Its function is as follows. Involved in chromosome condensation, segregation and cell cycle progression. May participate in facilitating chromosome segregation by condensation DNA from both sides of a centrally located replisome during cell division. Probably acts via its interaction with MukB and MukF. The protein is Chromosome partition protein MukE of Haemophilus ducreyi (strain 35000HP / ATCC 700724).